A 577-amino-acid chain; its full sequence is MRFSSIFRNTPIQFSNRRSSVKLLHSLPRLKPTNSKRFSQKPKLVKTQTLPDPSVYTRDIVSNIYNILKYSNWDSAQEQLPHLGVRWDSHIINRVLKAHPPMQKAWLFFNWAAQIKGFKHDHFTYTTMLDIFGEAGRIQSMYSVFHLMKEKGVLIDTVTYTSLIHWVSSSGDVDGAMRLWEEMRDNGCEPTVVSYTAYMKMLFADGRVEEATEVYKEMLRSRVSPNCHTYTVLMEYLVATGKCEEALDIFFKMQEIGVQPDKAACNILIAKALKFGETSFMTRVLVYMKENGVVLRYPIFVEALETLKAAGESDDLLREVNSHISVESLCSSDIDETPTAEVNDTKNSDDSRVISSVLLMKQNLVAVDILLNQMRDRNIKLDSFVVSAIIETNCDRCRTEGASLAFDYSLEMGIHLKKSAYLALIGNFLRSNELPKVIEVVKEMVKAQHSLGCYQGAMLIHRLGFGRRPRLAADVFDLLPDDQKGVAAYTALMDVYISAGSPEKAMKILREMREREIMPSLGTYDVLLSGLEKTSDFQKEVALLRKEKKSLVASARFRENVHVEDKICDLLFATNLL.

10 PPR repeats span residues 121–155 (DHFT…GVLI), 156–190 (DTVT…GCEP), 191–225 (TVVS…RVSP), 226–260 (NCHT…GVQP), 261–295 (DKAA…GVVL), 382–416 (DSFV…GIHL), 417–451 (KKSA…QHSL), 452–482 (GCYQ…LPDD), 485–519 (GVAA…EIMP), and 520–554 (SLGT…LVAS).

This sequence belongs to the PPR family. P subfamily.

This Arabidopsis thaliana (Mouse-ear cress) protein is Pentatricopeptide repeat-containing protein At2g01390.